A 567-amino-acid chain; its full sequence is Unguisins hydrolase ungD (567 aa).

Belongs to the peptidase S12 family.

It participates in secondary metabolite biosynthesis. Functionally, hydrolase; part of the gene cluster that mediates the biosynthesis of the unguisins, gamma-aminobutyric acid (GABA)-containing fungal cyclic heptapeptides with the amino acid sequence cyclo-(D-Ala1-D-Val2-L-Phe3-D-Val4-D-Ala5-D-Trp6-GABA7) for unguisin A and cyclo-(D-Ala1-D-Val2-L-Leu3-D-Val4-D-Ala5-D-Trp6-GABA7) for unguisin B. Within the pathway, the hydrolase ungD catalyzes the hydrolysis between the D-tryptophan and GABA residues of unguisins A and B to produce the corresponding linear peptides. The alanine racemase ungC catalyzes the interconversion of L-alanine and D-alanine, providing the D-alanine which is accepted by the first adenylation domain of the nonribosomal peptide synthetase (NRPS) ungA. UngA is the main enzyme within the cluster which condenses the 7 residues using its respective 7 modules. The terminal condensation domain (Ct) is involved in cyclization with D-alanine and thereby releasing of unguisins A and B. The polypeptide is Unguisins hydrolase ungD (Aspergillus violaceofuscus (strain CBS 115571)).